Here is a 354-residue protein sequence, read N- to C-terminus: Uroporphyrinogen decarboxylase (354 aa).

Substrate contacts are provided by residues 27 to 31, aspartate 77, tyrosine 154, serine 209, and histidine 327; that span reads RQAGR.

Belongs to the uroporphyrinogen decarboxylase family. As to quaternary structure, homodimer.

The protein resides in the cytoplasm. It catalyses the reaction uroporphyrinogen III + 4 H(+) = coproporphyrinogen III + 4 CO2. Its pathway is porphyrin-containing compound metabolism; protoporphyrin-IX biosynthesis; coproporphyrinogen-III from 5-aminolevulinate: step 4/4. Functionally, catalyzes the decarboxylation of four acetate groups of uroporphyrinogen-III to yield coproporphyrinogen-III. This Teredinibacter turnerae (strain ATCC 39867 / T7901) protein is Uroporphyrinogen decarboxylase.